The primary structure comprises 593 residues: MRVSRLLLVTLRDVPAEAEIASHQLLLRGGYIRRIGSGIYGYLPLMWKVIQRITAIVRDELNTAGAQETLLPQLHPAELWQRSGRWQGYTAGEGIMFHLEDRQGRELGLGPTHEEVVTSLAGELLQSYKQLPVNLYQVQTKFRDEIRPRFGLMRGREFIMKDAYSFHANEADLQNTYLEMDQAYRRIFERCGLAAVPVDADSGAIGGAASQEFMVTADAGEDLILLSDDGTYAANQEKAISTPSKAIPLEGASMELISTPDETSIDVLCRSHGWHQSQLIKVLLFIARLDDGVEQPLLISLRGDQDLNEVKLINAVGRLSGQEVLDCRPIQTEDLNKQGIDTIPLGFIGPDLDDGVLRSARSWTKQFLRCTDSTAAAMDRMVCGANQPDQHRLYATWADLGGAPKSLDLRKARAGEACVHNPEAHLIEKRGIEVGHIFQLGRKYSEAMDSRFTNEAGKTEHFWMGCYGIGISRLAQAAVEQHHDDAGICWPAAIAPYEAIVVVANMQDQTQAELGESLYKQLLAAGVDALFDDRKERAGVKFKDADLIGIPWRVVVGRDASDGVVELVERANRAVQKLPHADALKELLRTLRP.

It belongs to the class-II aminoacyl-tRNA synthetase family. ProS type 1 subfamily. Homodimer.

Its subcellular location is the cytoplasm. The enzyme catalyses tRNA(Pro) + L-proline + ATP = L-prolyl-tRNA(Pro) + AMP + diphosphate. In terms of biological role, catalyzes the attachment of proline to tRNA(Pro) in a two-step reaction: proline is first activated by ATP to form Pro-AMP and then transferred to the acceptor end of tRNA(Pro). As ProRS can inadvertently accommodate and process non-cognate amino acids such as alanine and cysteine, to avoid such errors it has two additional distinct editing activities against alanine. One activity is designated as 'pretransfer' editing and involves the tRNA(Pro)-independent hydrolysis of activated Ala-AMP. The other activity is designated 'posttransfer' editing and involves deacylation of mischarged Ala-tRNA(Pro). The misacylated Cys-tRNA(Pro) is not edited by ProRS. This Synechococcus sp. (strain CC9902) protein is Proline--tRNA ligase.